Here is a 732-residue protein sequence, read N- to C-terminus: Elongation factor 2 (732 aa).

The region spanning glutamate 19–arginine 260 is the tr-type G domain. GTP-binding positions include alanine 28–threonine 35, aspartate 94–histidine 98, and asparagine 148–aspartate 151. At histidine 598 the chain carries Diphthamide.

This sequence belongs to the TRAFAC class translation factor GTPase superfamily. Classic translation factor GTPase family. EF-G/EF-2 subfamily.

The protein localises to the cytoplasm. Catalyzes the GTP-dependent ribosomal translocation step during translation elongation. During this step, the ribosome changes from the pre-translocational (PRE) to the post-translocational (POST) state as the newly formed A-site-bound peptidyl-tRNA and P-site-bound deacylated tRNA move to the P and E sites, respectively. Catalyzes the coordinated movement of the two tRNA molecules, the mRNA and conformational changes in the ribosome. The protein is Elongation factor 2 of Picrophilus torridus (strain ATCC 700027 / DSM 9790 / JCM 10055 / NBRC 100828 / KAW 2/3).